A 196-amino-acid chain; its full sequence is Small ribosomal subunit protein uS4c (196 aa).

Residues 89–149 (MRLDNILFRL…DKQRSKALIQ (61 aa)) enclose the S4 RNA-binding domain.

The protein belongs to the universal ribosomal protein uS4 family. As to quaternary structure, part of the 30S ribosomal subunit. Contacts protein S5. The interaction surface between S4 and S5 is involved in control of translational fidelity.

Its subcellular location is the plastid. The protein resides in the chloroplast. One of the primary rRNA binding proteins, it binds directly to 16S rRNA where it nucleates assembly of the body of the 30S subunit. Its function is as follows. With S5 and S12 plays an important role in translational accuracy. This chain is Small ribosomal subunit protein uS4c (rps4), found in Asparagus maritimus (Sea asparagus).